The sequence spans 301 residues: ATP synthase gamma chain (301 aa).

It belongs to the ATPase gamma chain family. In terms of assembly, F-type ATPases have 2 components, CF(1) - the catalytic core - and CF(0) - the membrane proton channel. CF(1) has five subunits: alpha(3), beta(3), gamma(1), delta(1), epsilon(1). CF(0) has three main subunits: a, b and c.

It localises to the cell inner membrane. In terms of biological role, produces ATP from ADP in the presence of a proton gradient across the membrane. The gamma chain is believed to be important in regulating ATPase activity and the flow of protons through the CF(0) complex. This is ATP synthase gamma chain from Bordetella bronchiseptica (strain ATCC BAA-588 / NCTC 13252 / RB50) (Alcaligenes bronchisepticus).